Reading from the N-terminus, the 260-residue chain is Hemin import ATP-binding protein HmuV (260 aa).

The ABC transporter domain occupies 6-242; the sequence is LHADNLHYRA…VQLRACYQAD (237 aa). Residue 38–45 participates in ATP binding; the sequence is GPNGAGKS.

Belongs to the ABC transporter superfamily. Heme (hemin) importer (TC 3.A.1.14.5) family. The complex is composed of two ATP-binding proteins (HmuV), two transmembrane proteins (HmuU) and a solute-binding protein (HmuT).

The protein resides in the cell inner membrane. Part of the ABC transporter complex HmuTUV involved in hemin import. Responsible for energy coupling to the transport system. This chain is Hemin import ATP-binding protein HmuV, found in Sodalis glossinidius (strain morsitans).